The following is a 418-amino-acid chain: Putative O-antigen transporter (418 aa).

The next 11 helical transmembrane spans lie at 8-28 (VWNLFGYAIPTLIAIPSLGFL), 37-57 (FGVYTIAIALVGYAGIFDVGL), 85-105 (FLVLFSCFGAFLLLIFSDGIV), 124-144 (LLAICIPLFILNQLWSAILEG), 165-185 (IPAIFVFYSATLSAAVAGLIF), 217-237 (LFFFGGWMTVSNIISPVMVYF), 251-271 (VAFYSAPAEVILKLGIIPAAI), 297-317 (LLMFLICLPVIIIGLLYSGLV), 334-354 (LNVLLIGFFFNALAMIPFSAI), 362-382 (ITALIHCAELVPYLALLYFMV), and 385-405 (YGLLGAAISWSIRVILDALLL).

The protein belongs to the polysaccharide synthase family.

It is found in the cell inner membrane. The protein operates within bacterial outer membrane biogenesis; lipopolysaccharide biosynthesis. In terms of biological role, could be an O-antigen transporter. This Shigella flexneri protein is Putative O-antigen transporter (rfbE).